The primary structure comprises 181 residues: Thioredoxin-like protein CITRX2, chloroplastic (181 aa).

The transit peptide at 1–70 directs the protein to the chloroplast; that stretch reads MQAATLSFQP…PDVATGKYVR (70 aa). One can recognise a Thioredoxin domain in the interval 72–181; it reads DYLVKKVSAK…MMRDIINNDL (110 aa). Catalysis depends on nucleophile residues cysteine 104 and cysteine 107. Residues cysteine 104 and cysteine 107 are joined by a disulfide bond.

It belongs to the thioredoxin family. Plant CITRX-type subfamily.

It localises to the plastid. It is found in the chloroplast. Probable thiol-disulfide oxidoreductase that may play a role in proper chloroplast development. This chain is Thioredoxin-like protein CITRX2, chloroplastic, found in Nicotiana benthamiana.